The following is a 261-amino-acid chain: Carnitinyl-CoA dehydratase (261 aa).

Catalysis depends on Glu111, which acts as the Nucleophile. Catalysis depends on Glu131, which acts as the Proton acceptor.

The protein belongs to the enoyl-CoA hydratase/isomerase family.

It catalyses the reaction (R)-carnitinyl-CoA = crotonobetainyl-CoA + H2O. It participates in amine and polyamine metabolism; carnitine metabolism. Catalyzes the reversible dehydration of L-carnitinyl-CoA to crotonobetainyl-CoA. This is Carnitinyl-CoA dehydratase from Shigella flexneri.